We begin with the raw amino-acid sequence, 225 residues long: Cytochrome c oxidase subunit 2 (225 aa).

Residues 1–25 (MSTWMMFMFQESNSFYADNLVSFHN) are Mitochondrial intermembrane-facing. A helical transmembrane segment spans residues 26–47 (LVMMIIIMISTLTIYIIFDLFM). At 48–62 (NKFSNLFLLKNHNIE) the chain is on the mitochondrial matrix side. A helical membrane pass occupies residues 63–82 (IIWTIVPIVILLIICFPSLK). The Mitochondrial intermembrane portion of the chain corresponds to 83 to 225 (ILYLIDEIIN…FFLNWINKQN (143 aa)). Cu cation is bound by residues histidine 159, cysteine 194, glutamate 196, cysteine 198, histidine 202, and methionine 205. Glutamate 196 provides a ligand contact to Mg(2+).

This sequence belongs to the cytochrome c oxidase subunit 2 family. Component of the cytochrome c oxidase (complex IV, CIV), a multisubunit enzyme composed of a catalytic core of 3 subunits and several supernumerary subunits. The complex exists as a monomer or a dimer and forms supercomplexes (SCs) in the inner mitochondrial membrane with ubiquinol-cytochrome c oxidoreductase (cytochrome b-c1 complex, complex III, CIII). It depends on Cu cation as a cofactor.

It is found in the mitochondrion inner membrane. The enzyme catalyses 4 Fe(II)-[cytochrome c] + O2 + 8 H(+)(in) = 4 Fe(III)-[cytochrome c] + 2 H2O + 4 H(+)(out). In terms of biological role, component of the cytochrome c oxidase, the last enzyme in the mitochondrial electron transport chain which drives oxidative phosphorylation. The respiratory chain contains 3 multisubunit complexes succinate dehydrogenase (complex II, CII), ubiquinol-cytochrome c oxidoreductase (cytochrome b-c1 complex, complex III, CIII) and cytochrome c oxidase (complex IV, CIV), that cooperate to transfer electrons derived from NADH and succinate to molecular oxygen, creating an electrochemical gradient over the inner membrane that drives transmembrane transport and the ATP synthase. Cytochrome c oxidase is the component of the respiratory chain that catalyzes the reduction of oxygen to water. Electrons originating from reduced cytochrome c in the intermembrane space (IMS) are transferred via the dinuclear copper A center (CU(A)) of subunit 2 and heme A of subunit 1 to the active site in subunit 1, a binuclear center (BNC) formed by heme A3 and copper B (CU(B)). The BNC reduces molecular oxygen to 2 water molecules using 4 electrons from cytochrome c in the IMS and 4 protons from the mitochondrial matrix. The protein is Cytochrome c oxidase subunit 2 (COII) of Apis koschevnikovi (Koschevnikov's honey bee).